The chain runs to 223 residues: Protein NrfC (223 aa).

Positions 1 to 27 (MTWSRRQFLTGVGVLAAVSGTAGRVVA) form a signal peptide, tat-type signal. 4Fe-4S ferredoxin-type domains are found at residues 37-65 (YGMV…VPEG), 83-114 (VKYR…RDAA), and 116-145 (GIVD…IHPV). Positions 46, 49, 52, 56, 92, 95, 100, 104, 125, 128, 131, 135, 152, 155, 168, and 172 each coordinate [4Fe-4S] cluster.

In terms of processing, predicted to be exported by the Tat system. The position of the signal peptide cleavage has not been experimentally proven.

In terms of biological role, probably involved in the transfer of electrons from the quinone pool to the type-c cytochromes. In Escherichia coli O157:H7, this protein is Protein NrfC (nrfC).